The chain runs to 186 residues: Tumor necrosis factor alpha-induced protein 8-like protein 2 (186 aa).

The protein belongs to the TNFAIP8 family. TNFAIP8L2 subfamily.

Its function is as follows. Acts as a negative regulator of innate and adaptive immunity by maintaining immune homeostasis. Negative regulator of Toll-like receptor and T-cell receptor function. Prevents hyperresponsiveness of the immune system and maintains immune homeostasis. Inhibits jun/ap1 and NF-kappa-B activation. Promotes Fas-induced apoptosis. The polypeptide is Tumor necrosis factor alpha-induced protein 8-like protein 2 (tnfaip8l2) (Xenopus laevis (African clawed frog)).